The sequence spans 347 residues: Methylthioribose-1-phosphate isomerase (347 aa).

Substrate contacts are provided by residues 46-48 (RGA), arginine 89, and glutamine 196. Aspartate 237 (proton donor) is an active-site residue. 247 to 248 (NK) provides a ligand contact to substrate.

This sequence belongs to the eIF-2B alpha/beta/delta subunits family. MtnA subfamily.

The catalysed reaction is 5-(methylsulfanyl)-alpha-D-ribose 1-phosphate = 5-(methylsulfanyl)-D-ribulose 1-phosphate. It functions in the pathway amino-acid biosynthesis; L-methionine biosynthesis via salvage pathway; L-methionine from S-methyl-5-thio-alpha-D-ribose 1-phosphate: step 1/6. Its function is as follows. Catalyzes the interconversion of methylthioribose-1-phosphate (MTR-1-P) into methylthioribulose-1-phosphate (MTRu-1-P). In Chloroflexus aurantiacus (strain ATCC 29366 / DSM 635 / J-10-fl), this protein is Methylthioribose-1-phosphate isomerase.